Here is a 230-residue protein sequence, read N- to C-terminus: MREERPIIALDFPSFEEVKSFLSLFPADERLYVKIGMELYYAEGPDIVRYIKSLGHSVFLDLKLHDIPNTVRSTMAVLSRLGIDMTTVQAAGGVEMLRAAREGLGQGPILIAVTQLTSTSEEQMREDQNIQSTLIASVLHYAKRTAQAKLDGVVCSAHEVKVIKAEVPVGFVCLTPGIRPTGADIGDQKRVMTPHQARAIGSDYIVLGRPITRAADPVKAYHQIKAEWNR.

Residues D11, K34, 61–70 (DLKLHDIPNT), T117, R179, Q188, G208, and R209 each bind substrate. The active-site Proton donor is K63.

It belongs to the OMP decarboxylase family. Type 1 subfamily. In terms of assembly, homodimer.

The enzyme catalyses orotidine 5'-phosphate + H(+) = UMP + CO2. It participates in pyrimidine metabolism; UMP biosynthesis via de novo pathway; UMP from orotate: step 2/2. Its function is as follows. Catalyzes the decarboxylation of orotidine 5'-monophosphate (OMP) to uridine 5'-monophosphate (UMP). The polypeptide is Orotidine 5'-phosphate decarboxylase (Streptococcus equi subsp. zooepidemicus (strain H70)).